A 185-amino-acid polypeptide reads, in one-letter code: Ribosome-recycling factor (185 aa).

The protein belongs to the RRF family.

Its subcellular location is the cytoplasm. In terms of biological role, responsible for the release of ribosomes from messenger RNA at the termination of protein biosynthesis. May increase the efficiency of translation by recycling ribosomes from one round of translation to another. This is Ribosome-recycling factor from Campylobacter lari (strain RM2100 / D67 / ATCC BAA-1060).